Consider the following 540-residue polypeptide: uncharacterized protein (540 aa).

The transit peptide at 1–58 (MAVSAFRGTRLPLFHHSQFPVARTVSGTSKKMIGARNFKGFVLTAQYSQTQDLFTSRL) directs the protein to the chloroplast. A Protein kinase domain is found at 195 to 533 (YVDPTPIASA…ISIASNKRTN (339 aa)). Residues 201 to 209 (IASASIAQV) and Lys-224 contribute to the ATP site. The active-site Proton acceptor is the Asp-362.

Belongs to the protein kinase superfamily. ADCK protein kinase family.

It is found in the plastid. The protein localises to the chloroplast. Its subcellular location is the plastoglobule. This is an uncharacterized protein from Arabidopsis thaliana (Mouse-ear cress).